A 212-amino-acid polypeptide reads, in one-letter code: Large ribosomal subunit protein uL3 (212 aa).

The disordered stretch occupies residues 131-155 (RGNMTHGSKNHRLPGSTGAGTTPGR).

It belongs to the universal ribosomal protein uL3 family. Part of the 50S ribosomal subunit. Forms a cluster with proteins L14 and L19.

Its function is as follows. One of the primary rRNA binding proteins, it binds directly near the 3'-end of the 23S rRNA, where it nucleates assembly of the 50S subunit. The polypeptide is Large ribosomal subunit protein uL3 (Microcystis aeruginosa (strain NIES-843 / IAM M-2473)).